A 446-amino-acid chain; its full sequence is Glycerol-3-phosphate acyltransferase 3 (446 aa).

Helical transmembrane passes span 25–45 (LPSALGVSLGISEAYMWVLVK), 142–162 (LRLTVVWVIGVIVRYCFLLPL), and 164–184 (FTLAAIGITSMIVGTTVVGQL). The short motif at 232–237 (HTSPID) is the HXXXXD motif element. A helical membrane pass occupies residues 352-372 (IVSYLLRIMTSWAIVCHVWYM). The segment at 418-446 (FKEEQQKNYSKMLVRNGSQGNLPAGTESD) is disordered.

Belongs to the 1-acyl-sn-glycerol-3-phosphate acyltransferase family.

It is found in the endoplasmic reticulum membrane. The catalysed reaction is sn-glycerol 3-phosphate + an acyl-CoA = a 1-acyl-sn-glycero-3-phosphate + CoA. It catalyses the reaction a 1-acyl-sn-glycero-3-phosphate + an acyl-CoA = a 1,2-diacyl-sn-glycero-3-phosphate + CoA. The enzyme catalyses dodecanoyl-CoA + sn-glycerol 3-phosphate = 1-dodecanoyl-sn-glycerol 3-phosphate + CoA. It carries out the reaction sn-glycerol 3-phosphate + hexadecanoyl-CoA = 1-hexadecanoyl-sn-glycero-3-phosphate + CoA. The catalysed reaction is sn-glycerol 3-phosphate + (9Z)-octadecenoyl-CoA = 1-(9Z-octadecenoyl)-sn-glycero-3-phosphate + CoA. It catalyses the reaction (9Z,12Z)-octadecadienoyl-CoA + sn-glycerol 3-phosphate = 1-(9Z,12Z)-octadecadienoyl-sn-glycero-3-phosphate + CoA. The enzyme catalyses 1-tetradecanoyl-sn-glycerol 3-phosphate + (9Z)-octadecenoyl-CoA = 1-tetradecanoyl-2-(9Z)-octadecenoyl-sn-glycero-3-phosphate + CoA. It carries out the reaction 1-hexadecanoyl-sn-glycero-3-phosphate + (9Z)-octadecenoyl-CoA = 1-hexadecanoyl-2-(9Z-octadecenoyl)-sn-glycero-3-phosphate + CoA. The catalysed reaction is 1-(9Z-octadecenoyl)-sn-glycero-3-phosphate + (9Z)-octadecenoyl-CoA = 1,2-di-(9Z-octadecenoyl)-sn-glycero-3-phosphate + CoA. It catalyses the reaction 1-(6Z,9Z,12Z-octadecatrienoyl)-sn-glycero-3-phosphate + (9Z)-octadecenoyl-CoA = (6Z,9Z,12Z)-octadecatrienoyl-2-(9Z)-octadecenoyl-sn-glycero-3-phosphate + CoA. The enzyme catalyses 1-(9Z,12Z,15Z)-octadecatrienoyl-sn-glycero-3-phosphate + (9Z)-octadecenoyl-CoA = 1-(9Z,12Z,15Z)-octadecatrienoyl-2-(9Z)-octadecenoyl-sn-glycero-3-phosphate + CoA. It carries out the reaction 1-(9Z-octadecenoyl)-sn-glycero-3-phosphate + tetradecanoyl-CoA = 1-(9Z)-octadecenoyl-2-tetradecanoyl-sn-glycero-3-phosphate + CoA. The catalysed reaction is 1-(9Z-octadecenoyl)-sn-glycero-3-phosphate + hexadecanoyl-CoA = 1-(9Z)-octadecenoyl-2-hexadecanoyl-sn-glycero-3-phosphate + CoA. It catalyses the reaction 1-(9Z-octadecenoyl)-sn-glycero-3-phosphate + octadecanoyl-CoA = 1-(9Z-octadecenoyl)-2-octadecanoyl-sn-glycero-3-phosphate + CoA. The enzyme catalyses 1-(9Z-octadecenoyl)-sn-glycero-3-phosphate + (9Z,12Z)-octadecadienoyl-CoA = 1-(9Z)-octadecenoyl-2-(9Z,12Z)-octadecadienoyl-sn-glycero-3-phosphate + CoA. It carries out the reaction 1-(5Z,8Z,11Z,14Z-eicosatetraenoyl)-sn-glycero-3-phosphate + (9Z)-octadecenoyl-CoA = 1-(5Z,8Z,11Z,14Z)-eicosatetraenoyl-2-(9Z)-octadecenoyl-sn-glycero-3-phosphate + CoA. It participates in glycerolipid metabolism; triacylglycerol biosynthesis. The protein operates within phospholipid metabolism; CDP-diacylglycerol biosynthesis; CDP-diacylglycerol from sn-glycerol 3-phosphate: step 1/3. Its function is as follows. Converts glycerol-3-phosphate to 1-acyl-sn-glycerol-3-phosphate (lysophosphatidic acid or LPA) by incorporating an acyl moiety at the sn-1 position of the glycerol backbone. Also converts LPA into 1,2-diacyl-sn-glycerol-3-phosphate (phosphatidic acid or PA) by incorporating an acyl moiety at the sn-2 position of the glycerol backbone. Protects cells against lipotoxicity. The protein is Glycerol-3-phosphate acyltransferase 3 of Gallus gallus (Chicken).